The following is a 149-amino-acid chain: MAAKVEPFWKRKTLDRLDAEEWESLCDGCGLCCLQKLEDEEDGSVYYTRIACRLLDLETCRCRDYANRRRSVPDCIQLTPAQAGEFQWLPPTCAYRLLAEGEDLPLWHPLVCGDPQAVHRERISRAGRMLSESAVAEDDWEEHLIFRAG.

It belongs to the UPF0260 family.

The chain is UPF0260 protein Avin_32930 from Azotobacter vinelandii (strain DJ / ATCC BAA-1303).